The chain runs to 99 residues: uncharacterized protein (99 aa).

A signal peptide spans 1-19 (MLGMIRWVVEGTLVAMLLS). Positions 71–99 (DGFGRINDSGPKRRGRDQSQYSSRFVELD) are disordered.

The protein localises to the cytoplasm. This is an uncharacterized protein from Saccharomyces cerevisiae (strain ATCC 204508 / S288c) (Baker's yeast).